The following is a 151-amino-acid chain: Ribonuclease H (151 aa).

An RNase H type-1 domain is found at M1–A146. Residues D9, E52, D74, and D138 each contribute to the Mg(2+) site.

Belongs to the RNase H family. In terms of assembly, monomer. It depends on Mg(2+) as a cofactor.

It is found in the cytoplasm. The enzyme catalyses Endonucleolytic cleavage to 5'-phosphomonoester.. Endonuclease that specifically degrades the RNA of RNA-DNA hybrids. This chain is Ribonuclease H, found in Cereibacter sphaeroides (strain ATCC 17025 / ATH 2.4.3) (Rhodobacter sphaeroides).